We begin with the raw amino-acid sequence, 262 residues long: R3H domain-containing protein 4 (262 aa).

Disordered regions lie at residues 1 to 27 and 132 to 155; these read MVAL…PGCL and YLED…RRED. A compositionally biased stretch (basic and acidic residues) spans 146-155; it reads GRGEDRRRED. In terms of domain architecture, R3H spans 182 to 245; sequence METLESWEER…RRQMKVSNRH (64 aa).

The protein resides in the nucleus. The sequence is that of R3H domain-containing protein 4 (R3hdm4) from Mus musculus (Mouse).